A 293-amino-acid polypeptide reads, in one-letter code: Phosphatidylcholine-sterol acyltransferase (293 aa).

N-linked (GlcNAc...) asparagine glycosylation is present at N26. S123 acts as the Nucleophile in catalysis. Residue N179 is glycosylated (N-linked (GlcNAc...) asparagine). A disulfide bridge connects residues C220 and C263. The active-site Charge relay system is the D252. The N-linked (GlcNAc...) asparagine glycan is linked to N280. H284 acts as the Charge relay system in catalysis.

This sequence belongs to the AB hydrolase superfamily. Lipase family.

The protein resides in the secreted. The catalysed reaction is a sterol + a 1,2-diacyl-sn-glycero-3-phosphocholine = a sterol ester + a 1-acyl-sn-glycero-3-phosphocholine. Its activity is regulated as follows. APOA1 is the most potent activator in plasma. Also activated by APOE, APOC1 and APOA4. Its function is as follows. Central enzyme in the extracellular metabolism of plasma lipoproteins. Synthesized mainly in the liver and secreted into plasma where it converts cholesterol and phosphatidylcholines (lecithins) to cholesteryl esters and lysophosphatidylcholines on the surface of high and low density lipoproteins (HDLs and LDLs). The cholesterol ester is then transported back to the liver. Has a preference for plasma 16:0-18:2 or 18:O-18:2 phosphatidylcholines. Also produced in the brain by primary astrocytes, and esterifies free cholesterol on nascent APOE-containing lipoproteins secreted from glia and influences cerebral spinal fluid (CSF) APOE- and APOA1 levels. Together with APOE and the cholesterol transporter ABCA1, plays a key role in the maturation of glial-derived, nascent lipoproteins. Required for remodeling high-density lipoprotein particles into their spherical forms. The polypeptide is Phosphatidylcholine-sterol acyltransferase (LCAT) (Gerbilliscus gambianus (Gambian gerbil)).